Here is a 136-residue protein sequence, read N- to C-terminus: Probable endoribonuclease MazF7 (136 aa).

The disordered stretch occupies residues 115 to 136; it reads TGPERGEAATHSPVRWTGGRDP.

It belongs to the PemK/MazF family. As to quaternary structure, forms a complex with cognate antitoxin MazE7.

In terms of biological role, toxic component of a type II toxin-antitoxin (TA) system. Upon expression in E.coli and M.smegmatis inhibits cell growth and colony formation. Its toxic effect is neutralized by coexpression with cognate antitoxin MazE7. Probably an endoribonuclease. This Mycobacterium tuberculosis (strain ATCC 25618 / H37Rv) protein is Probable endoribonuclease MazF7 (mazF7).